We begin with the raw amino-acid sequence, 457 residues long: tRNA (guanine(37)-N(1))-methyltransferase (457 aa).

Residues H240, 278 to 279, 306 to 307, and N338 contribute to the S-adenosyl-L-methionine site; these read DL and DG.

Belongs to the class I-like SAM-binding methyltransferase superfamily. TRM5/TYW2 family. As to quaternary structure, monomer.

It localises to the mitochondrion matrix. Its subcellular location is the nucleus. It is found in the cytoplasm. The catalysed reaction is guanosine(37) in tRNA + S-adenosyl-L-methionine = N(1)-methylguanosine(37) in tRNA + S-adenosyl-L-homocysteine + H(+). Its function is as follows. Specifically methylates the N1 position of guanosine-37 in various cytoplasmic and mitochondrial tRNAs. Methylation is not dependent on the nature of the nucleoside 5' of the target nucleoside. This is the first step in the biosynthesis of wybutosine (yW), a modified base adjacent to the anticodon of tRNAs and required for accurate decoding. This is tRNA (guanine(37)-N(1))-methyltransferase from Drosophila melanogaster (Fruit fly).